The following is a 130-amino-acid chain: Small ribosomal subunit protein uS8 (130 aa).

It belongs to the universal ribosomal protein uS8 family. As to quaternary structure, part of the 30S ribosomal subunit. Contacts proteins S5 and S12.

Its function is as follows. One of the primary rRNA binding proteins, it binds directly to 16S rRNA central domain where it helps coordinate assembly of the platform of the 30S subunit. The polypeptide is Small ribosomal subunit protein uS8 (Haemophilus ducreyi (strain 35000HP / ATCC 700724)).